Consider the following 388-residue polypeptide: Alcohol dehydrogenase-like 1 (388 aa).

Zn(2+) is bound by residues cysteine 53, threonine 55, histidine 76, cysteine 106, cysteine 109, cysteine 112, cysteine 120, and cysteine 185. Residues threonine 55 and histidine 76 each coordinate an alcohol. NAD(+) is bound at residue threonine 55. Residues 210–215, aspartate 234, lysine 239, 304–306, phenylalanine 331, and arginine 381 each bind NAD(+); these read GLGAVG and LGM.

Belongs to the zinc-containing alcohol dehydrogenase family. Class-III subfamily. As to quaternary structure, homodimer. It depends on Zn(2+) as a cofactor.

It is found in the cytoplasm. It catalyses the reaction a primary alcohol + NAD(+) = an aldehyde + NADH + H(+). It carries out the reaction a secondary alcohol + NAD(+) = a ketone + NADH + H(+). The chain is Alcohol dehydrogenase-like 1 from Arabidopsis thaliana (Mouse-ear cress).